A 122-amino-acid chain; its full sequence is Ig heavy chain V region M603 (122 aa).

The region spanning 1–121 is the Ig-like domain; it reads EVKLVESGGG…WGAGTTVTVS (121 aa).

This is Ig heavy chain V region M603 from Mus musculus (Mouse).